Here is a 366-residue protein sequence, read N- to C-terminus: UDP-N-acetylglucosamine--N-acetylmuramyl-(pentapeptide) pyrophosphoryl-undecaprenol N-acetylglucosamine transferase (366 aa).

Residues 10–12 (TGG), Asn-124, Arg-165, Ser-195, Ile-250, and Gln-295 contribute to the UDP-N-acetyl-alpha-D-glucosamine site.

Belongs to the glycosyltransferase 28 family. MurG subfamily.

The protein localises to the cell inner membrane. It carries out the reaction di-trans,octa-cis-undecaprenyl diphospho-N-acetyl-alpha-D-muramoyl-L-alanyl-D-glutamyl-meso-2,6-diaminopimeloyl-D-alanyl-D-alanine + UDP-N-acetyl-alpha-D-glucosamine = di-trans,octa-cis-undecaprenyl diphospho-[N-acetyl-alpha-D-glucosaminyl-(1-&gt;4)]-N-acetyl-alpha-D-muramoyl-L-alanyl-D-glutamyl-meso-2,6-diaminopimeloyl-D-alanyl-D-alanine + UDP + H(+). Its pathway is cell wall biogenesis; peptidoglycan biosynthesis. Its function is as follows. Cell wall formation. Catalyzes the transfer of a GlcNAc subunit on undecaprenyl-pyrophosphoryl-MurNAc-pentapeptide (lipid intermediate I) to form undecaprenyl-pyrophosphoryl-MurNAc-(pentapeptide)GlcNAc (lipid intermediate II). The chain is UDP-N-acetylglucosamine--N-acetylmuramyl-(pentapeptide) pyrophosphoryl-undecaprenol N-acetylglucosamine transferase from Thermodesulfovibrio yellowstonii (strain ATCC 51303 / DSM 11347 / YP87).